A 522-amino-acid chain; its full sequence is GMP synthase [glutamine-hydrolyzing] (522 aa).

A Glutamine amidotransferase type-1 domain is found at Arg8 to Asp204. Cys86 acts as the Nucleophile in catalysis. Active-site residues include His179 and Glu181. The region spanning Trp205–Arg397 is the GMPS ATP-PPase domain. Ser232–Ser238 serves as a coordination point for ATP.

Homodimer.

It catalyses the reaction XMP + L-glutamine + ATP + H2O = GMP + L-glutamate + AMP + diphosphate + 2 H(+). It participates in purine metabolism; GMP biosynthesis; GMP from XMP (L-Gln route): step 1/1. In terms of biological role, catalyzes the synthesis of GMP from XMP. This Roseobacter denitrificans (strain ATCC 33942 / OCh 114) (Erythrobacter sp. (strain OCh 114)) protein is GMP synthase [glutamine-hydrolyzing].